The chain runs to 499 residues: tRNA (guanine(37)-N(1))-methyltransferase (499 aa).

Residues 1–44 (MKIALPVFQKFNRLISSCKMSGVFPYNPPVNRQMRELDRSFFIT) constitute a mitochondrion transit peptide. S-adenosyl-L-methionine is bound by residues histidine 268, 307–308 (DL), 335–336 (DG), and asparagine 399.

The protein belongs to the class I-like SAM-binding methyltransferase superfamily. TRM5/TYW2 family. Monomer.

Its subcellular location is the mitochondrion matrix. It is found in the nucleus. The protein localises to the cytoplasm. It catalyses the reaction guanosine(37) in tRNA + S-adenosyl-L-methionine = N(1)-methylguanosine(37) in tRNA + S-adenosyl-L-homocysteine + H(+). Its function is as follows. Specifically methylates the N1 position of guanosine-37 in various cytoplasmic and mitochondrial tRNAs. Methylation is not dependent on the nature of the nucleoside 5' of the target nucleoside. This is the first step in the biosynthesis of wybutosine (yW), a modified base adjacent to the anticodon of tRNAs and required for accurate decoding. Postspliced cytoplasmic tRNAs are imported into the nucleus, where this first step seems to take place, after which they are reexported to the cytoplasm, where the yW sythesis is completed by cytoplasmic enzymes. This chain is tRNA (guanine(37)-N(1))-methyltransferase, found in Saccharomyces cerevisiae (strain ATCC 204508 / S288c) (Baker's yeast).